Reading from the N-terminus, the 561-residue chain is Interleukin-1 receptor-like 2 (561 aa).

Positions 1 to 21 are cleaved as a signal peptide; the sequence is MGMPPLLFCWVSFVLPLFVAA. 3 consecutive Ig-like C2-type domains span residues 22–113, 128–215, and 225–321; these read GNCT…INLT, SINS…VRNY, and SGGR…TCHA. The Extracellular segment spans residues 22-338; the sequence is GNCTDVYMHH…ILKRPAPDFR (317 aa). Residues Asn23, Asn43, Asn55, Asn111, and Asn130 are each glycosylated (N-linked (GlcNAc...) asparagine). Cys44 and Cys97 are disulfide-bonded. Cysteines 149 and 199 form a disulfide. Asn231, Asn237, Asn253, Asn269, Asn290, and Asn302 each carry an N-linked (GlcNAc...) asparagine glycan. A disulfide bridge links Cys252 with Cys319. A helical membrane pass occupies residues 339-358; sequence AYLIGGLMAFLLLAVSILYI. Residues 359 to 561 are Cytoplasmic-facing; sequence YNTFKVDIVL…LLGHTPRIPG (203 aa). One can recognise a TIR domain in the interval 384 to 539; sequence KLYDAYVLYP…KFWKKVRYHM (156 aa). The active site involves Glu470.

Belongs to the interleukin-1 receptor family. Interacts with IL1RAP; the association is enhanced by IL36B indicative for an functional signaling complex and inhibited by IL36RN. Predominant expression in the lung and epididymis, with lower expression in cerebral cortex and testis. Expression in the brain is non-neuronal and associated with the cerebral vasculature. Not detected in any cell line tested.

The protein resides in the membrane. The enzyme catalyses NAD(+) + H2O = ADP-D-ribose + nicotinamide + H(+). Receptor for interleukin-36 (IL36A, IL36B and IL36G). After binding to interleukin-36 associates with the coreceptor IL1RAP to form the interleukin-36 receptor complex which mediates interleukin-36-dependent activation of NF-kappa-B, MAPK and other pathways. The IL-36 signaling system is thought to be present in epithelial barriers and to take part in local inflammatory response; it is similar to the IL-1 system. Seems to be involved in skin inflammatory response by induction of the IL-23/IL-17/IL-22 pathway. Receptor for the interleukin IL36G. Binding to the agonist leads to the activation of NF-kappa-B. The sequence is that of Interleukin-1 receptor-like 2 (Il1rl2) from Rattus norvegicus (Rat).